Here is a 202-residue protein sequence, read N- to C-terminus: Josephin-1 (202 aa).

Serine 15 carries the phosphoserine modification. The region spanning 23–202 (PPQIYHEKQR…EAHQSWRTDV (180 aa)) is the Josephin domain. Cysteine 36 acts as the Nucleophile in catalysis. Histidine 139 acts as the Proton acceptor in catalysis.

As to quaternary structure, interacts with beta-actin/ACTB. In terms of processing, monoubiquitinated. Ubiquitination activates deubiquitination activity in vitro.

Its subcellular location is the cell membrane. It localises to the cytoplasm. The enzyme catalyses Thiol-dependent hydrolysis of ester, thioester, amide, peptide and isopeptide bonds formed by the C-terminal Gly of ubiquitin (a 76-residue protein attached to proteins as an intracellular targeting signal).. Functionally, deubiquitinates monoubiquitinated probes (in vitro). When ubiquitinated, cleaves 'Lys-63'-linked and 'Lys-48'-linked poly-ubiquitin chains (in vitro), hence may act as a deubiquitinating enzyme. May increase macropinocytosis and suppress clathrin- and caveolae-mediated endocytosis. May enhance membrane dynamics and cell motility independently of its catalytic activity. The protein is Josephin-1 (JOSD1) of Pongo abelii (Sumatran orangutan).